Reading from the N-terminus, the 137-residue chain is Large ribosomal subunit protein uL16c (137 aa).

This sequence belongs to the universal ribosomal protein uL16 family. In terms of assembly, part of the 50S ribosomal subunit.

The protein localises to the plastid. In Cuscuta exaltata (Tall dodder), this protein is Large ribosomal subunit protein uL16c.